The sequence spans 238 residues: Purine nucleoside phosphorylase DeoD-type (238 aa).

Residue His5 participates in a purine D-ribonucleoside binding. Phosphate-binding positions include Gly21, Arg25, Arg44, and 88-91 (RVGS). A purine D-ribonucleoside contacts are provided by residues 180 to 182 (EME) and 204 to 205 (SD). The active-site Proton donor is the Asp205.

Belongs to the PNP/UDP phosphorylase family. As to quaternary structure, homohexamer; trimer of homodimers.

It carries out the reaction a purine D-ribonucleoside + phosphate = a purine nucleobase + alpha-D-ribose 1-phosphate. The enzyme catalyses a purine 2'-deoxy-D-ribonucleoside + phosphate = a purine nucleobase + 2-deoxy-alpha-D-ribose 1-phosphate. In terms of biological role, catalyzes the reversible phosphorolytic breakdown of the N-glycosidic bond in the beta-(deoxy)ribonucleoside molecules, with the formation of the corresponding free purine bases and pentose-1-phosphate. The sequence is that of Purine nucleoside phosphorylase DeoD-type from Proteus mirabilis (strain HI4320).